The chain runs to 599 residues: Microtubule-associated protein 70-2 (599 aa).

The segment at 1–30 (MADGGGGEEGSASALRGSARRRGAVQPAGL) is disordered. The stretch at 43–349 (DPVKVELNRL…ARSEAQLKEK (307 aa)) forms a coiled coil. The segment at 227–460 (ILDRLHRQKV…HLLNRSTDAV (234 aa)) is required for targeting to microtubules. Disordered regions lie at residues 357 to 453 (LEDG…PHLL) and 557 to 599 (AMRL…RNLQ). Positions 404-420 (RRSPSFNSRSSLSTSSS) are enriched in low complexity. Positions 533-570 (LTKAMEVEAKKMRREVAAMEKEVAAMRLDKDQENKAKR) form a coiled coil. Basic and acidic residues predominate over residues 557-568 (AMRLDKDQENKA).

This sequence belongs to the MAP70 family.

It localises to the cytoplasm. The protein localises to the cytoskeleton. Plant-specific protein that interact with microtubules. This Oryza sativa subsp. japonica (Rice) protein is Microtubule-associated protein 70-2 (MAP70.2).